The chain runs to 525 residues: Keratin, type I cytoskeletal 24 (525 aa).

The tract at residues 1–30 (MSCSSRASSSRAGGSSSARVSAGGSSFSSG) is disordered. The segment at 1-139 (MSCSSRASSS…VGDGGLFSGG (139 aa)) is head. The tract at residues 140–175 (EKQTMQNLNDRLANYLDKVRALEEANTDLENKIKEW) is coil 1A. The IF rod domain occupies 140–456 (EKQTMQNLND…RLLDGEGGGS (317 aa)). The interval 176 to 198 (YDKYGPGSGDGGSGRDYSKYYSI) is linker 1. A coil 1B region spans residues 199 to 290 (IEDLRNQIIA…KNHEEEMKNM (92 aa)). The segment at 291 to 313 (QGSSGGEVTVEMNAAPGTDLTKL) is linker 12. The tract at residues 314-452 (LNDMRAQYEE…ETYRRLLDGE (139 aa)) is coil 2. The interval 453-525 (GGGSSFAEFG…VSSISEVKVK (73 aa)) is tail. A disordered region spans residues 459–497 (AEFGGRNSGSVNMGSRDLVSGDSRSGSCSGQGRDSSKTR). Over residues 480 to 491 (DSRSGSCSGQGR) the composition is skewed to polar residues.

This sequence belongs to the intermediate filament family. In terms of assembly, heterotetramer of two type I and two type II keratins. In terms of tissue distribution, highly expressed in keratinocytes, placenta, colon and spleen. Expressed at lower level in thymus and testis.

The chain is Keratin, type I cytoskeletal 24 (KRT24) from Homo sapiens (Human).